A 61-amino-acid polypeptide reads, in one-letter code: Photosystem II reaction center X protein (61 aa).

The helical transmembrane segment at 26-46 threads the bilayer; it reads IGSFIAAALLIVIPATAFLIF.

This sequence belongs to the PsbX family. Type 2 subfamily. As to quaternary structure, PSII consists of a core antenna complex that captures photons, and an electron transfer chain that converts photonic excitation into a charge separation. PSII forms dimeric complexes.

It localises to the cellular thylakoid membrane. In terms of biological role, involved in the binding and/or turnover of quinones at the Q(B) site of Photosystem II. The polypeptide is Photosystem II reaction center X protein (Prochlorococcus marinus (strain MIT 9301)).